The primary structure comprises 334 residues: Ferredoxin--NADP reductase (334 aa).

FAD-binding residues include D33, Q41, Y46, A86, F120, D286, and T327.

The protein belongs to the ferredoxin--NADP reductase type 2 family. In terms of assembly, homodimer. It depends on FAD as a cofactor.

It carries out the reaction 2 reduced [2Fe-2S]-[ferredoxin] + NADP(+) + H(+) = 2 oxidized [2Fe-2S]-[ferredoxin] + NADPH. This chain is Ferredoxin--NADP reductase, found in Rickettsia prowazekii (strain Madrid E).